The following is a 407-amino-acid chain: 1-deoxy-D-xylulose 5-phosphate reductoisomerase (407 aa).

NADPH-binding residues include Thr-25, Gly-26, Ser-27, Ile-28, Asn-53, and Asn-136. Lys-137 is a 1-deoxy-D-xylulose 5-phosphate binding site. Glu-138 provides a ligand contact to NADPH. Asp-162 contributes to the Mn(2+) binding site. The 1-deoxy-D-xylulose 5-phosphate site is built by Ser-163, Glu-164, Ser-188, and His-211. Glu-164 is a Mn(2+) binding site. Gly-217 is an NADPH binding site. Residues Ser-224, Asn-229, Lys-230, and Glu-233 each contribute to the 1-deoxy-D-xylulose 5-phosphate site. Mn(2+) is bound at residue Glu-233.

Belongs to the DXR family. It depends on Mg(2+) as a cofactor. Mn(2+) is required as a cofactor.

It carries out the reaction 2-C-methyl-D-erythritol 4-phosphate + NADP(+) = 1-deoxy-D-xylulose 5-phosphate + NADPH + H(+). It functions in the pathway isoprenoid biosynthesis; isopentenyl diphosphate biosynthesis via DXP pathway; isopentenyl diphosphate from 1-deoxy-D-xylulose 5-phosphate: step 1/6. Functionally, catalyzes the NADPH-dependent rearrangement and reduction of 1-deoxy-D-xylulose-5-phosphate (DXP) to 2-C-methyl-D-erythritol 4-phosphate (MEP). This is 1-deoxy-D-xylulose 5-phosphate reductoisomerase from Bradyrhizobium sp. (strain BTAi1 / ATCC BAA-1182).